A 673-amino-acid chain; its full sequence is B3 domain-containing protein Os01g0905400 (673 aa).

Positions 1-34 (MVELIKVPKIEQEEGNADSHGKEKADVVHEEKTE) are enriched in basic and acidic residues. Residues 1–44 (MVELIKVPKIEQEEGNADSHGKEKADVVHEEKTEKVKRRRKRVS) are disordered. The TF-B3 1 DNA-binding region spans 79–172 (LPSFFKIMVG…VFTVQIFAIS (94 aa)). Residues 315–337 (PSFSYPESSNVMTADKESERSHQ) form a disordered region. Residues 328–337 (ADKESERSHQ) are compositionally biased toward basic and acidic residues. The TF-B3 2 DNA-binding region spans 576–671 (SKKFCITIPP…ELSFQVLVPN (96 aa)).

It localises to the nucleus. This chain is B3 domain-containing protein Os01g0905400, found in Oryza sativa subsp. japonica (Rice).